A 311-amino-acid chain; its full sequence is Biotin synthase (311 aa).

The 227-residue stretch at Asn32–Ala258 folds into the Radical SAM core domain. Positions 47, 51, and 54 each coordinate [4Fe-4S] cluster. The [2Fe-2S] cluster site is built by Cys91, Cys124, Cys184, and Arg256.

The protein belongs to the radical SAM superfamily. Biotin synthase family. As to quaternary structure, homodimer. It depends on [4Fe-4S] cluster as a cofactor. [2Fe-2S] cluster is required as a cofactor.

The catalysed reaction is (4R,5S)-dethiobiotin + (sulfur carrier)-SH + 2 reduced [2Fe-2S]-[ferredoxin] + 2 S-adenosyl-L-methionine = (sulfur carrier)-H + biotin + 2 5'-deoxyadenosine + 2 L-methionine + 2 oxidized [2Fe-2S]-[ferredoxin]. It functions in the pathway cofactor biosynthesis; biotin biosynthesis; biotin from 7,8-diaminononanoate: step 2/2. Catalyzes the conversion of dethiobiotin (DTB) to biotin by the insertion of a sulfur atom into dethiobiotin via a radical-based mechanism. This is Biotin synthase from Methylacidiphilum infernorum (isolate V4) (Methylokorus infernorum (strain V4)).